Consider the following 140-residue polypeptide: Nucleoside diphosphate kinase (140 aa).

Residues lysine 11, phenylalanine 59, arginine 87, threonine 93, arginine 104, and asparagine 114 each coordinate ATP. Residue histidine 117 is the Pros-phosphohistidine intermediate of the active site.

This sequence belongs to the NDK family. In terms of assembly, homotetramer. Mg(2+) serves as cofactor.

It is found in the cytoplasm. It carries out the reaction a 2'-deoxyribonucleoside 5'-diphosphate + ATP = a 2'-deoxyribonucleoside 5'-triphosphate + ADP. It catalyses the reaction a ribonucleoside 5'-diphosphate + ATP = a ribonucleoside 5'-triphosphate + ADP. In terms of biological role, major role in the synthesis of nucleoside triphosphates other than ATP. The ATP gamma phosphate is transferred to the NDP beta phosphate via a ping-pong mechanism, using a phosphorylated active-site intermediate. The protein is Nucleoside diphosphate kinase of Rhodopseudomonas palustris (strain BisB5).